Reading from the N-terminus, the 61-residue chain is Probable tautomerase stu1128 (61 aa).

The active-site Proton acceptor; via imino nitrogen is proline 2.

Belongs to the 4-oxalocrotonate tautomerase family.

The chain is Probable tautomerase stu1128 from Streptococcus thermophilus (strain ATCC BAA-250 / LMG 18311).